A 178-amino-acid chain; its full sequence is Interleukin-10 (178 aa).

The N-terminal stretch at Met-1–Ala-18 is a signal peptide. 2 disulfide bridges follow: Cys-30–Cys-126 and Cys-80–Cys-132. N-linked (GlcNAc...) asparagine glycosylation is present at Asn-134.

It belongs to the IL-10 family. In terms of assembly, homodimer. Interacts with IL10RA and IL10RB. Produced by a variety of cell lines, including T-cells, macrophages, mast cells and other cell types.

It localises to the secreted. Its function is as follows. Major immune regulatory cytokine that acts on many cells of the immune system where it has profound anti-inflammatory functions, limiting excessive tissue disruption caused by inflammation. Mechanistically, IL10 binds to its heterotetrameric receptor comprising IL10RA and IL10RB leading to JAK1 and STAT2-mediated phosphorylation of STAT3. In turn, STAT3 translocates to the nucleus where it drives expression of anti-inflammatory mediators. Targets antigen-presenting cells (APCs) such as macrophages and monocytes and inhibits their release of pro-inflammatory cytokines including granulocyte-macrophage colony-stimulating factor /GM-CSF, granulocyte colony-stimulating factor/G-CSF, IL-1 alpha, IL-1 beta, IL-6, IL-8 and TNF-alpha. Also interferes with antigen presentation by reducing the expression of MHC-class II and co-stimulatory molecules, thereby inhibiting their ability to induce T cell activation. In addition, controls the inflammatory response of macrophages by reprogramming essential metabolic pathways including mTOR signaling. This chain is Interleukin-10 (IL10), found in Homo sapiens (Human).